Here is a 625-residue protein sequence, read N- to C-terminus: Chaperone protein HtpG (625 aa).

Residues 1–330 (MAKQVQNFNA…SSDLSLNVSR (330 aa)) are a; substrate-binding. The tract at residues 331–545 (ELLQQDRQVT…SADPSAHMQK (215 aa)) is b. A c region spans residues 546–625 (LMAQMGKEYA…MVQAADSTKH (80 aa)).

It belongs to the heat shock protein 90 family. In terms of assembly, homodimer.

It is found in the cytoplasm. Functionally, molecular chaperone. Has ATPase activity. This Bdellovibrio bacteriovorus (strain ATCC 15356 / DSM 50701 / NCIMB 9529 / HD100) protein is Chaperone protein HtpG.